The primary structure comprises 258 residues: MTLPVFFGCAFIAFGPAFALYLFTIATDPLRVIFLIAGAFFWLVSLLLSSMFWFLVRVITNNRDESVQNYLLIFGALLSVCIQELFRLAYYKLLKKASEGLKSINPEEDIAPSMRLLAYVSGLGFGIMSGVFSFVNTLSNSLGPGTVGIHGDSPQFFLNSAFMTLVVIMLHVFWGVVFFDGCEKNKWYTLLTVLLTHLVVSTQTFLSPYYEVNLVTAYIIMVLMGIWAFYVAGGSCRSLKFCLLCQDKDFLLYNQRSR.

A run of 7 helical transmembrane segments spans residues 5–25 (VFFG…LFTI), 32–52 (VIFL…SSMF), 71–91 (LLIF…LAYY), 116–136 (LLAY…SFVN), 161–181 (AFMT…FFDG), 187–207 (WYTL…TFLS), and 214–234 (LVTA…VAGG).

It belongs to the APH-1 family. Potential component of the gamma-secretase complex.

It is found in the membrane. Potential subunit of the gamma-secretase complex, an endoprotease complex that catalyzes the intramembrane cleavage of integral proteins such as Notch receptors and APP (amyloid-beta precursor protein). The polypeptide is Putative gamma-secretase subunit APH-1C (Aph1c) (Mus musculus (Mouse)).